A 113-amino-acid polypeptide reads, in one-letter code: Nucleoid-associated protein Athe_1143 (113 aa).

The protein belongs to the YbaB/EbfC family. In terms of assembly, homodimer.

The protein localises to the cytoplasm. It localises to the nucleoid. Its function is as follows. Binds to DNA and alters its conformation. May be involved in regulation of gene expression, nucleoid organization and DNA protection. The chain is Nucleoid-associated protein Athe_1143 from Caldicellulosiruptor bescii (strain ATCC BAA-1888 / DSM 6725 / KCTC 15123 / Z-1320) (Anaerocellum thermophilum).